A 639-amino-acid chain; its full sequence is ATP-dependent zinc metalloprotease FtsH (639 aa).

Topologically, residues 1 to 15 (MDNEKQASPPPAAPP) are cytoplasmic. Residues 16–36 (LNWRYLLWIILLGIFLISWLG) traverse the membrane as a helical segment. Residues 37-123 (NAGRQAGDEI…VQAKSEEPSL (87 aa)) lie on the Periplasmic side of the membrane. Residues 124–144 (WMQAIIGILPWFLILGLIFYV) traverse the membrane as a helical segment. The Cytoplasmic portion of the chain corresponds to 145–639 (SYRMQQRMMG…HNEAVATGAG (495 aa)). Residue 221 to 228 (GRPGTGKT) coordinates ATP. Histidine 442 contributes to the Zn(2+) binding site. Glutamate 443 is an active-site residue. Zn(2+) is bound by residues histidine 446 and aspartate 518.

The protein in the central section; belongs to the AAA ATPase family. It in the C-terminal section; belongs to the peptidase M41 family. Homohexamer. It depends on Zn(2+) as a cofactor.

It is found in the cell inner membrane. Acts as a processive, ATP-dependent zinc metallopeptidase for both cytoplasmic and membrane proteins. Plays a role in the quality control of integral membrane proteins. This Nitrosococcus oceani (strain ATCC 19707 / BCRC 17464 / JCM 30415 / NCIMB 11848 / C-107) protein is ATP-dependent zinc metalloprotease FtsH.